A 311-amino-acid polypeptide reads, in one-letter code: Putative S-adenosyl-L-methionine-dependent methyltransferase MRA_0152 (311 aa).

Residues Asp-135 and Asp-164–Leu-165 each bind S-adenosyl-L-methionine.

Belongs to the UPF0677 family.

Its function is as follows. Exhibits S-adenosyl-L-methionine-dependent methyltransferase activity. In Mycobacterium tuberculosis (strain ATCC 25177 / H37Ra), this protein is Putative S-adenosyl-L-methionine-dependent methyltransferase MRA_0152.